The primary structure comprises 137 residues: Ig heavy chain V region MOPC 315 (137 aa).

A signal peptide spans 1 to 18; the sequence is MKVLSLLYLLTAIPGIMS. A framework-1 region spans residues 19–48; it reads DVQLQESGPGLVKPSQSLSLTCSVTGYSIT. Residues cysteine 40 and cysteine 114 are joined by a disulfide bond. The segment at 49 to 54 is complementarity-determining-1; the sequence is SGYFWN. A framework-2 region spans residues 55-68; that stretch reads WIRQFPGNKLEWLG. The segment at 69–84 is complementarity-determining-2; sequence FIKYDGSNGYNPSLKN. A framework-3 region spans residues 85–116; the sequence is RVSITRDTSENQFFLKLNSVTTEDTATYYCAG. Positions 117–126 are complementarity-determining-3; the sequence is DNDHLYYFDY. A framework-4 region spans residues 127-137; that stretch reads WGQGTTLTVSS.

The protein is Ig heavy chain V region MOPC 315 of Mus musculus (Mouse).